The sequence spans 163 residues: Phosphopantetheine adenylyltransferase (163 aa).

Ser-10 is a substrate binding site. ATP contacts are provided by residues 10–11 (SF) and His-18. Substrate-binding residues include Lys-42, Leu-78, and Lys-92. Residues 93-95 (GVR), Glu-103, and 127-133 (HAHVSSS) each bind ATP.

This sequence belongs to the bacterial CoaD family. In terms of assembly, homohexamer. Mg(2+) serves as cofactor.

It localises to the cytoplasm. The enzyme catalyses (R)-4'-phosphopantetheine + ATP + H(+) = 3'-dephospho-CoA + diphosphate. The protein operates within cofactor biosynthesis; coenzyme A biosynthesis; CoA from (R)-pantothenate: step 4/5. Reversibly transfers an adenylyl group from ATP to 4'-phosphopantetheine, yielding dephospho-CoA (dPCoA) and pyrophosphate. The chain is Phosphopantetheine adenylyltransferase from Clavibacter michiganensis subsp. michiganensis (strain NCPPB 382).